A 217-amino-acid polypeptide reads, in one-letter code: External core antigen (217 aa).

The N-terminal stretch at 1 to 19 (MYLFHLCLVFACVPCPTFQ) is a signal peptide. The interval 26 to 28 (GWL) is HBEAG. The tract at residues 180–217 (RRGGARASRSPRRRTPSPRRRRSQSPRRRRSQSPSANC) is disordered. Positions 188-210 (RSPRRRTPSPRRRRSQSPRRRRS) are enriched in basic residues. The 1; half-length repeat unit spans residues 189-195 (SPRRRTP). The tract at residues 189-211 (SPRRRTPSPRRRRSQSPRRRRSQ) is 3 X 8 AA repeats of S-P-R-R-R-R-S-Q. A propeptide spanning residues 189–217 (SPRRRTPSPRRRRSQSPRRRRSQSPSANC) is cleaved from the precursor. 2 tandem repeats follow at residues 196–203 (SPRRRRSQ) and 204–211 (SPRRRRSQ).

The protein belongs to the orthohepadnavirus precore antigen family. As to quaternary structure, homodimerizes. Post-translationally, phosphorylated. In terms of processing, cleaved by host furin.

It is found in the secreted. It localises to the host nucleus. Functionally, may regulate immune response to the intracellular capsid in acting as a T-cell tolerogen, by having an immunoregulatory effect which prevents destruction of infected cells by cytotoxic T-cells. This immune regulation may predispose to chronicity during perinatal infections and prevent severe liver injury during adult infections. In Marmota monax (Woodchuck), this protein is External core antigen.